Consider the following 356-residue polypeptide: Histidinol-phosphate aminotransferase 1 (356 aa).

An N6-(pyridoxal phosphate)lysine modification is found at Lys210.

The protein belongs to the class-II pyridoxal-phosphate-dependent aminotransferase family. Histidinol-phosphate aminotransferase subfamily. Homodimer. The cofactor is pyridoxal 5'-phosphate.

The enzyme catalyses L-histidinol phosphate + 2-oxoglutarate = 3-(imidazol-4-yl)-2-oxopropyl phosphate + L-glutamate. Its pathway is amino-acid biosynthesis; L-histidine biosynthesis; L-histidine from 5-phospho-alpha-D-ribose 1-diphosphate: step 7/9. The protein is Histidinol-phosphate aminotransferase 1 of Hydrogenovibrio crunogenus (strain DSM 25203 / XCL-2) (Thiomicrospira crunogena).